The primary structure comprises 520 residues: Cytochrome P450 monooxygenase TRI4 (520 aa).

The helical transmembrane segment at 10–30 (LVNIPISHAVGVVAASTVIYF) threads the bilayer. N-linked (GlcNAc...) asparagine glycosylation is present at Asn447. Cys455 provides a ligand contact to heme.

This sequence belongs to the cytochrome P450 family. The cofactor is heme.

The protein resides in the membrane. It participates in sesquiterpene biosynthesis; trichothecene biosynthesis. Functionally, cytochrome P450 monooxygenase; part of the core gene cluster that mediates the biosynthesis of trichothecenes, a very large family of chemically related bicyclic sesquiterpene compounds acting as mycotoxins, including T2-toxin. The biosynthesis of trichothecenes begins with the cyclization of farnesyl diphosphate to trichodiene and is catalyzed by the trichodiene synthase TRI5. Trichodiene undergoes a series of oxygenations catalyzed by the cytochrome P450 monooxygenase TRI4. TRI4 controls the addition of four oxygens at C-2, C-3, C-11, and the C-12, C-13-epoxide to form the intermediate isotrichotriol. Isotrichotriol then undergoes a non-enzymatic isomerization and cyclization to form isotrichodermol. During this process, the oxygen at the C-2 position becomes the pyran ring oxygen and the hydroxyl group at C-11 is lost. More complex type A trichothecenes are built by modifying isotrichodermol through a series of paired hydroxylation and acetylation or acylation steps. Isotrichodermol is converted to isotrichodermin by the acetyltransferase TRI101. TRI101 encodes a C-3 transacetylase that acts as a self-protection or resistance factor during biosynthesis and that the presence of a free C-3 hydroxyl group is a key component of Fusarium trichothecene phytotoxicity. A second hydroxyl group is added to C-15 by the trichothecene C-15 hydroxylase TRI11, producing 15-decalonectrin, which is then acetylated by TRI3, producing calonectrin. A third hydroxyl group is added at C-4 by the cytochrome P450 monooxygenase TRI13, converting calonectrin to 3,15-diacetoxyspirpenol, which is subsequently acetylated by the acetyltransferase TRI7. A fourth hydroxyl group is added to C-8 by the cytochrome P450 monooxygenase TRI1, followed by the addition of an isovaleryl moiety by TRI16. Finally, the acetyl group is removed from the C-3 position by the trichothecene C-3 esterase TRI8 to produce T-2 toxin. The protein is Cytochrome P450 monooxygenase TRI4 of Fusarium sporotrichioides.